The primary structure comprises 141 residues: Nucleoside triphosphatase NudI (141 aa).

Residues 1–141 (MRQRTIVCPL…RHTLALKGLL (141 aa)) form the Nudix hydrolase domain. The Nudix box signature appears at 38–59 (GGVEPGERIEEALRREVREELG).

It belongs to the Nudix hydrolase family. NudI subfamily. As to quaternary structure, monomer. The cofactor is Mg(2+).

It catalyses the reaction a ribonucleoside 5'-triphosphate + H2O = a ribonucleoside 5'-phosphate + diphosphate + H(+). It carries out the reaction a 2'-deoxyribonucleoside 5'-triphosphate + H2O = a 2'-deoxyribonucleoside 5'-phosphate + diphosphate + H(+). The catalysed reaction is dUTP + H2O = dUMP + diphosphate + H(+). The enzyme catalyses dTTP + H2O = dTMP + diphosphate + H(+). It catalyses the reaction dCTP + H2O = dCMP + diphosphate + H(+). Functionally, catalyzes the hydrolysis of nucleoside triphosphates, with a preference for pyrimidine deoxynucleoside triphosphates (dUTP, dTTP and dCTP). The chain is Nucleoside triphosphatase NudI from Salmonella agona (strain SL483).